Consider the following 410-residue polypeptide: Divergent protein kinase domain 1A (410 aa).

At 1-5 (MARLS) the chain is on the cytoplasmic side. A helical membrane pass occupies residues 6 to 26 (YVRIKYLFFSWLAVFIGSWVI). Topologically, residues 27–410 (YVRYNSYTEL…WKKISHTNDS (384 aa)) are lumenal.

Belongs to the DIPK family. Post-translationally, among the many cysteines in the lumenal domain, most are probably involved in disulfide bonds.

The protein localises to the endoplasmic reticulum membrane. The sequence is that of Divergent protein kinase domain 1A (dipk1a) from Xenopus laevis (African clawed frog).